A 162-amino-acid chain; its full sequence is Regulatory protein RecX (162 aa).

It belongs to the RecX family.

The protein localises to the cytoplasm. Functionally, modulates RecA activity. This Pectobacterium atrosepticum (strain SCRI 1043 / ATCC BAA-672) (Erwinia carotovora subsp. atroseptica) protein is Regulatory protein RecX.